Reading from the N-terminus, the 856-residue chain is Envelope glycoprotein gp160 (856 aa).

The N-terminal stretch at 1–32 (MRVKEKYQHLRRWGWRWGTMLLGMLMICSATE) is a signal peptide. The Extracellular segment spans residues 33–684 (KLWVTVYYGV…ITNWLWYIKI (652 aa)). The cysteines at positions 54 and 74 are disulfide-linked. Residues asparagine 88, asparagine 136, asparagine 141, asparagine 156, asparagine 160, asparagine 186, asparagine 197, asparagine 230, asparagine 234, asparagine 241, asparagine 262, asparagine 276, asparagine 289, asparagine 295, asparagine 301, asparagine 332, asparagine 339, and asparagine 356 are each glycosylated (N-linked (GlcNAc...) asparagine; by host). Intrachain disulfides connect cysteine 119–cysteine 205, cysteine 126–cysteine 196, cysteine 131–cysteine 157, cysteine 218–cysteine 247, and cysteine 228–cysteine 239. Residues 131–156 (CTDLKNDTNTNSSSGGMIMEKGEIKN) form a V1 region. Positions 157-196 (CSFNISTSIRGKVQKEYAFFYKHDIIPIDNDTTSYTLTSC) are V2. Residues 296–330 (CTRPNNNTRKRIRIQRGPGRTFVTIGKIGNMRQAH) form a V3 region. Residues cysteine 296 and cysteine 331 are joined by a disulfide bond. The segment at 364-374 (SSGGDLEIVTH) is CD4-binding loop. Disulfide bonds link cysteine 378-cysteine 445 and cysteine 385-cysteine 418. The V4 stretch occupies residues 385-418 (CNSTQLFNSTWFNSTWSTEGSNNTEGSDTITLPC). N-linked (GlcNAc...) asparagine; by host glycans are attached at residues asparagine 386, asparagine 392, asparagine 397, asparagine 406, asparagine 448, and asparagine 463. 2 V5 regions span residues 461–471 (NNNGSEIFRPG) and 463–471 (NGSEIFRPG). The segment at 512–532 (AVGIGALFLGFLGAAGSTMGA) is fusion peptide. The segment at 574-592 (KQLQARILAVERYLKDQQL) is immunosuppression. Cysteine 598 and cysteine 604 are disulfide-bonded. N-linked (GlcNAc...) asparagine; by host glycosylation is found at asparagine 611, asparagine 616, asparagine 624, asparagine 637, and asparagine 674. Residues 633–667 (REINNYTSLIHSLIEESQNQQEKNEQELLELDKWA) are a coiled coil. The segment at 662-683 (ELDKWASLWNWFNITNWLWYIK) is MPER; binding to GalCer. The chain crosses the membrane as a helical span at residues 685–705 (FIMIVGGLVGLRIVFAVLSIV). Over 706 to 856 (NRVRQGHSPL…IRQGLERILL (151 aa)) the chain is Cytoplasmic. Positions 715–742 (LSFQTHLPTPGGPDRPEGIEEEGGERDR) are disordered. S-palmitoyl cysteine; by host attachment occurs at residues cysteine 764 and cysteine 837. Residues 855–856 (LL) carry the Di-leucine internalization motif motif.

This sequence belongs to the HIV-1 env protein family. The mature envelope protein (Env) consists of a homotrimer of non-covalently associated gp120-gp41 heterodimers. The resulting complex protrudes from the virus surface as a spike. There seems to be as few as 10 spikes on the average virion. Interacts with host CD4, CCR5 and CXCR4. Gp120 also interacts with the C-type lectins CD209/DC-SIGN and CLEC4M/DC-SIGNR (collectively referred to as DC-SIGN(R)). Gp120 and gp41 interact with GalCer. Gp120 interacts with host ITGA4/ITGB7 complex; on CD4+ T-cells, this interaction results in rapid activation of integrin ITGAL/LFA-1, which facilitates efficient cell-to-cell spreading of HIV-1. Gp120 interacts with cell-associated heparan sulfate; this interaction increases virus infectivity on permissive cells and may be involved in infection of CD4- cells. In terms of assembly, the mature envelope protein (Env) consists of a homotrimer of non-covalently associated gp120-gp41 heterodimers. The resulting complex protrudes from the virus surface as a spike. There seems to be as few as 10 spikes on the average virion. Post-translationally, highly glycosylated by host. The high number of glycan on the protein is reffered to as 'glycan shield' because it contributes to hide protein sequence from adaptive immune system. Palmitoylation of the transmembrane protein and of Env polyprotein (prior to its proteolytic cleavage) is essential for their association with host cell membrane lipid rafts. Palmitoylation is therefore required for envelope trafficking to classical lipid rafts, but not for viral replication. In terms of processing, specific enzymatic cleavages in vivo yield mature proteins. Envelope glycoproteins are synthesized as an inactive precursor that is heavily N-glycosylated and processed likely by host cell furin in the Golgi to yield the mature SU and TM proteins. The cleavage site between SU and TM requires the minimal sequence [KR]-X-[KR]-R. About 2 of the 9 disulfide bonds of gp41 are reduced by P4HB/PDI, following binding to CD4 receptor.

The protein resides in the virion membrane. The protein localises to the host cell membrane. Its subcellular location is the host endosome membrane. Oligomerizes in the host endoplasmic reticulum into predominantly trimers. In a second time, gp160 transits in the host Golgi, where glycosylation is completed. The precursor is then proteolytically cleaved in the trans-Golgi and thereby activated by cellular furin or furin-like proteases to produce gp120 and gp41. Functionally, attaches the virus to the host lymphoid cell by binding to the primary receptor CD4. This interaction induces a structural rearrangement creating a high affinity binding site for a chemokine coreceptor like CXCR4 and/or CCR5. Acts as a ligand for CD209/DC-SIGN and CLEC4M/DC-SIGNR, which are respectively found on dendritic cells (DCs), and on endothelial cells of liver sinusoids and lymph node sinuses. These interactions allow capture of viral particles at mucosal surfaces by these cells and subsequent transmission to permissive cells. HIV subverts the migration properties of dendritic cells to gain access to CD4+ T-cells in lymph nodes. Virus transmission to permissive T-cells occurs either in trans (without DCs infection, through viral capture and transmission), or in cis (following DCs productive infection, through the usual CD4-gp120 interaction), thereby inducing a robust infection. In trans infection, bound virions remain infectious over days and it is proposed that they are not degraded, but protected in non-lysosomal acidic organelles within the DCs close to the cell membrane thus contributing to the viral infectious potential during DCs' migration from the periphery to the lymphoid tissues. On arrival at lymphoid tissues, intact virions recycle back to DCs' cell surface allowing virus transmission to CD4+ T-cells. Its function is as follows. Acts as a class I viral fusion protein. Under the current model, the protein has at least 3 conformational states: pre-fusion native state, pre-hairpin intermediate state, and post-fusion hairpin state. During fusion of viral and target intracellular membranes, the coiled coil regions (heptad repeats) assume a trimer-of-hairpins structure, positioning the fusion peptide in close proximity to the C-terminal region of the ectodomain. The formation of this structure appears to drive apposition and subsequent fusion of viral and target cell membranes. Complete fusion occurs in host cell endosomes and is dynamin-dependent, however some lipid transfer might occur at the plasma membrane. The virus undergoes clathrin-dependent internalization long before endosomal fusion, thus minimizing the surface exposure of conserved viral epitopes during fusion and reducing the efficacy of inhibitors targeting these epitopes. Membranes fusion leads to delivery of the nucleocapsid into the cytoplasm. This chain is Envelope glycoprotein gp160, found in Homo sapiens (Human).